Reading from the N-terminus, the 318-residue chain is DNA primase small subunit PriS (318 aa).

Residues aspartate 95, aspartate 97, and aspartate 224 contribute to the active site.

Belongs to the eukaryotic-type primase small subunit family. In terms of assembly, heterodimer of a small subunit (PriS) and a large subunit (PriL). Mg(2+) serves as cofactor. The cofactor is Mn(2+).

Its function is as follows. Catalytic subunit of DNA primase, an RNA polymerase that catalyzes the synthesis of short RNA molecules used as primers for DNA polymerase during DNA replication. The small subunit contains the primase catalytic core and has DNA synthesis activity on its own. Binding to the large subunit stabilizes and modulates the activity, increasing the rate of DNA synthesis while decreasing the length of the DNA fragments, and conferring RNA synthesis capability. The DNA polymerase activity may enable DNA primase to also catalyze primer extension after primer synthesis. May also play a role in DNA repair. The protein is DNA primase small subunit PriS of Sulfurisphaera tokodaii (strain DSM 16993 / JCM 10545 / NBRC 100140 / 7) (Sulfolobus tokodaii).